The primary structure comprises 367 residues: Alanine racemase (367 aa).

Catalysis depends on K40, which acts as the Proton acceptor; specific for D-alanine. K40 carries the N6-(pyridoxal phosphate)lysine modification. R136 is a substrate binding site. Catalysis depends on Y263, which acts as the Proton acceptor; specific for L-alanine. M310 serves as a coordination point for substrate.

It belongs to the alanine racemase family. Pyridoxal 5'-phosphate serves as cofactor.

The catalysed reaction is L-alanine = D-alanine. The protein operates within amino-acid biosynthesis; D-alanine biosynthesis; D-alanine from L-alanine: step 1/1. Catalyzes the interconversion of L-alanine and D-alanine. May also act on other amino acids. This chain is Alanine racemase (alr), found in Streptococcus pneumoniae (strain 70585).